The primary structure comprises 66 residues: Large ribosomal subunit protein uL29 (66 aa).

This sequence belongs to the universal ribosomal protein uL29 family.

This chain is Large ribosomal subunit protein uL29, found in Lachnospira eligens (strain ATCC 27750 / DSM 3376 / VPI C15-48 / C15-B4) (Eubacterium eligens).